We begin with the raw amino-acid sequence, 31 residues long: Photosystem II reaction center protein T (31 aa).

The chain crosses the membrane as a helical span at residues 3–23 (SFAYVLILTLAIATLFFAIAF).

It belongs to the PsbT family. As to quaternary structure, PSII is composed of 1 copy each of membrane proteins PsbA, PsbB, PsbC, PsbD, PsbE, PsbF, PsbH, PsbI, PsbJ, PsbK, PsbL, PsbM, PsbT, PsbX, PsbY, PsbZ, Psb30/Ycf12, peripheral proteins PsbO, CyanoQ (PsbQ), PsbU, PsbV and a large number of cofactors. It forms dimeric complexes.

It localises to the cellular thylakoid membrane. Functionally, found at the monomer-monomer interface of the photosystem II (PS II) dimer, plays a role in assembly and dimerization of PSII. PSII is a light-driven water plastoquinone oxidoreductase, using light energy to abstract electrons from H(2)O, generating a proton gradient subsequently used for ATP formation. This Parasynechococcus marenigrum (strain WH8102) protein is Photosystem II reaction center protein T.